Consider the following 363-residue polypeptide: tRNA dimethylallyltransferase (363 aa).

Position 65–72 (65–72) interacts with ATP; that stretch reads GPTASGKS. Residue 67–72 participates in substrate binding; it reads TASGKS. 2 interaction with substrate tRNA regions span residues 90–93 and 214–218; these read DSMQ and QRLIR.

It belongs to the IPP transferase family. As to quaternary structure, monomer. Mg(2+) is required as a cofactor.

The catalysed reaction is adenosine(37) in tRNA + dimethylallyl diphosphate = N(6)-dimethylallyladenosine(37) in tRNA + diphosphate. Functionally, catalyzes the transfer of a dimethylallyl group onto the adenine at position 37 in tRNAs that read codons beginning with uridine, leading to the formation of N6-(dimethylallyl)adenosine (i(6)A). The chain is tRNA dimethylallyltransferase from Rickettsia massiliae (strain Mtu5).